Consider the following 159-residue polypeptide: Small ribosomal subunit protein uS7 (159 aa).

The protein belongs to the universal ribosomal protein uS7 family. As to quaternary structure, part of the 30S ribosomal subunit. Contacts proteins S9 and S11.

In terms of biological role, one of the primary rRNA binding proteins, it binds directly to 16S rRNA where it nucleates assembly of the head domain of the 30S subunit. Is located at the subunit interface close to the decoding center, probably blocks exit of the E-site tRNA. The chain is Small ribosomal subunit protein uS7 from Endomicrobium trichonymphae.